The chain runs to 673 residues: Thimet-like oligopeptidase (673 aa).

A Zn(2+)-binding site is contributed by His465. Glu466 is a catalytic residue. His469 and His472 together coordinate Zn(2+).

It belongs to the peptidase M3 family. Zn(2+) serves as cofactor.

The sequence is that of Thimet-like oligopeptidase from Dictyostelium discoideum (Social amoeba).